Consider the following 62-residue polypeptide: Guanine nucleotide-binding protein subunit gamma (62 aa).

Positions D40 to L62 are disordered. Over residues F53 to L62 the composition is skewed to basic and acidic residues. Residue C59 is modified to Cysteine methyl ester. Residue C59 is the site of S-geranylgeranyl cysteine attachment. The propeptide at S60–L62 is removed in mature form.

It belongs to the G protein gamma family. G proteins are composed of 3 units, alpha, beta and gamma. Interacts with gpb-1 and gpb-2. As to expression, predominantly expressed in the central nervous system.

Its subcellular location is the cell membrane. In terms of biological role, guanine nucleotide-binding proteins (G proteins) are involved as a modulator or transducer in various transmembrane signaling systems. The beta and gamma chains are required for the GTPase activity, for replacement of GDP by GTP, and for G protein-effector interaction. The sequence is that of Guanine nucleotide-binding protein subunit gamma (gpc-1) from Caenorhabditis elegans.